Here is a 255-residue protein sequence, read N- to C-terminus: Protein YIPF7 (255 aa).

Over 1-124 (MSNLGQFDSD…ADGSIMNETD (124 aa)) the chain is Cytoplasmic. Residues 125–145 (LTGPILFCMALGATLLLAGKV) traverse the membrane as a helical segment. Residue Gln146 is a topological domain, lumenal. A helical membrane pass occupies residues 147 to 167 (FGYVYGMSAIGCLGIHALLNL). The Cytoplasmic portion of the chain corresponds to 168 to 180 (MSSSGVSYGCVAS). The helical transmembrane segment at 181–201 (VLGYCLLPMVILSSCAIFFSL) threads the bilayer. Residues 202–204 (QGT) lie on the Lumenal side of the membrane. The helical transmembrane segment at 205 to 225 (FGTVSALVIIGWCSLSASKIF) threads the bilayer. Residues 226 to 234 (TSALAMEGQ) lie on the Cytoplasmic side of the membrane. Residues 235-255 (QLLIAYPCALLYGLFALVTVF) traverse the membrane as a helical segment.

This sequence belongs to the YIP1 family.

Its subcellular location is the endoplasmic reticulum membrane. It is found in the golgi apparatus. The protein localises to the cis-Golgi network membrane. It localises to the trans-Golgi network membrane. The chain is Protein YIPF7 (YIPF7) from Bos taurus (Bovine).